The following is a 244-amino-acid chain: Small ribosomal subunit protein uS3 (244 aa).

The 69-residue stretch at 39 to 107 (VREMLRKKLA…PAHINVTEVR (69 aa)) folds into the KH type-2 domain. Residues 213–244 (VGQEKQDDSPRNDRNDRGDRGDRPSRPAREAR) form a disordered region. Residues 216-244 (EKQDDSPRNDRNDRGDRGDRPSRPAREAR) show a composition bias toward basic and acidic residues.

It belongs to the universal ribosomal protein uS3 family. In terms of assembly, part of the 30S ribosomal subunit. Forms a tight complex with proteins S10 and S14.

Its function is as follows. Binds the lower part of the 30S subunit head. Binds mRNA in the 70S ribosome, positioning it for translation. In Xanthomonas axonopodis pv. citri (strain 306), this protein is Small ribosomal subunit protein uS3.